The chain runs to 191 residues: ECF RNA polymerase sigma-E factor (191 aa).

The tract at residues 1-153 is binds RNAP core; that stretch reads MSEQLTDQVL…MAITLRELDG (153 aa). Residues 25 to 92 form a sigma-70 factor domain-2 region; the sequence is LVVRYQHKVA…KNYLVAQGRR (68 aa). Positions 48 to 61 match the Polymerase core binding motif; sequence DVVQEAFIKAYRAL. A sigma-70 factor domain-4 region spans residues 129 to 180; that stretch reads QIVFRTIESLPEDLRMAITLRELDGLSYEEIAAIMDCPVGTVRSRIFRAREA. Positions 156–175 form a DNA-binding region, H-T-H motif; the sequence is YEEIAAIMDCPVGTVRSRIF.

This sequence belongs to the sigma-70 factor family. ECF subfamily. As to quaternary structure, interacts transiently with the RNAP catalytic core formed by RpoA, RpoB, RpoC and RpoZ (2 alpha, 1 beta, 1 beta' and 1 omega subunit) to form the RNAP holoenzyme that can initiate transcription. Interacts 1:1 with anti-sigma-E factor RseA which prevents binding to RNAP catalytic core.

The protein localises to the cytoplasm. ECF sigma-E is held in an inactive form by its cognate anti-sigma factor (RseA) until released by regulated intramembrane proteolysis (RIP). RIP occurs when an extracytoplasmic signal (periplasmic stress and excess LPS) triggers a concerted proteolytic cascade to transmit information and elicit cellular responses. The anti-sigma factor RseA is an inner membrane protein, binding sigma-E in the cytoplasm and RseB in the periplasm. RseA is first cut extracytoplasmically (site-1 protease, S1P, by DegS), then within the membrane itself (site-2 protease, S2P, by RseP), while cytoplasmic proteases (predominantly ClpX-ClpP) finish degrading the regulatory protein, liberating sigma-E. Degradation of RseA requires 2 signals to activate DegS; an outer membrane protein (OMP) signal activates DegS, while an LPS signal causes release of RseB from RseA, freeing RseA to be cleaved. Sigma factors are initiation factors that promote the attachment of RNA polymerase (RNAP) to specific initiation sites and are then released. Extracytoplasmic function (ECF) sigma-E controls the envelope stress response, responding to periplasmic protein stress, increased levels of periplasmic lipopolysaccharide (LPS) as well as heat shock and oxidative stress; it controls protein processing in the extracytoplasmic compartment. This is ECF RNA polymerase sigma-E factor (rpoE) from Escherichia coli O157:H7.